Consider the following 696-residue polypeptide: Serine/threonine-protein kinase sck1 (696 aa).

Disordered regions lie at residues 1–59 (MTEI…YDPV) and 77–118 (HKEQ…TPPS). The segment covering 11–37 (SSNSENTNQASPSTIQSHSTQPVLSND) has biased composition (polar residues). 2 stretches are compositionally biased toward basic and acidic residues: residues 38–49 (HSTKVNDYEGKE) and 77–88 (HKEQSLKEDKES). The region spanning 122–272 (IRHDTVVPKD…VQEAWYKLEP (151 aa)) is the C2 domain. The Protein kinase domain occupies 302–563 (FTALRLIGKG…TTELKEHPFF (262 aa)). ATP is bound by residues 308-316 (IGKGTFGQV) and lysine 331. Aspartate 428 serves as the catalytic Proton acceptor. An AGC-kinase C-terminal domain is found at 564–643 (ADINWDLLSK…VNKSIDEQFQ (80 aa)). Threonine 632 carries the phosphothreonine modification. Serine 665 bears the Phosphoserine mark.

It belongs to the protein kinase superfamily. AGC Ser/Thr protein kinase family. cAMP subfamily.

It catalyses the reaction L-seryl-[protein] + ATP = O-phospho-L-seryl-[protein] + ADP + H(+). The enzyme catalyses L-threonyl-[protein] + ATP = O-phospho-L-threonyl-[protein] + ADP + H(+). Functionally, protein kinase that is part of growth control pathway which is at least partially redundant with the cAMP pathway. Required for trehalase activation. In Schizosaccharomyces pombe (strain 972 / ATCC 24843) (Fission yeast), this protein is Serine/threonine-protein kinase sck1 (sck1).